The chain runs to 195 residues: Imidazoleglycerol-phosphate dehydratase (195 aa).

The protein belongs to the imidazoleglycerol-phosphate dehydratase family.

It localises to the cytoplasm. It catalyses the reaction D-erythro-1-(imidazol-4-yl)glycerol 3-phosphate = 3-(imidazol-4-yl)-2-oxopropyl phosphate + H2O. It functions in the pathway amino-acid biosynthesis; L-histidine biosynthesis; L-histidine from 5-phospho-alpha-D-ribose 1-diphosphate: step 6/9. The sequence is that of Imidazoleglycerol-phosphate dehydratase from Burkholderia pseudomallei (strain 1710b).